Here is a 21-residue protein sequence, read N- to C-terminus: Nigrocin-2GRb (21 aa).

As to expression, expressed by the skin glands.

Its subcellular location is the secreted. In terms of biological role, antimicrobial peptide active against the Gram-positive bacterium S.aureus (MIC=12.5 uM) and against the Gram-negative bacteria E.coli (MIC=3 uM). Has antifungal activity against C.albicans (MIC=50 uM). Has some hemolytic activity against human erythrocytes (LC(50)=40 uM). The protein is Nigrocin-2GRb of Odorrana grahami (Yunnanfu frog).